Consider the following 994-residue polypeptide: Phosphoenolpyruvate carboxylase (994 aa).

The segment at methionine 1 to arginine 66 is disordered. Composition is skewed to low complexity over residues alanine 14–glutamate 25 and alanine 41–alanine 54. Residues histidine 204 and lysine 646 contribute to the active site.

This sequence belongs to the PEPCase type 1 family. It depends on Mg(2+) as a cofactor.

The catalysed reaction is oxaloacetate + phosphate = phosphoenolpyruvate + hydrogencarbonate. In terms of biological role, forms oxaloacetate, a four-carbon dicarboxylic acid source for the tricarboxylic acid cycle. This Burkholderia pseudomallei (strain 668) protein is Phosphoenolpyruvate carboxylase.